The sequence spans 192 residues: Pyridoxal 5'-phosphate synthase subunit PdxT (192 aa).

53–55 (GES) contacts L-glutamine. Residue C82 is the Nucleophile of the active site. Residues R109 and 137–138 (IR) contribute to the L-glutamine site. Residues H173 and E175 each act as charge relay system in the active site.

This sequence belongs to the glutaminase PdxT/SNO family. As to quaternary structure, in the presence of PdxS, forms a dodecamer of heterodimers. Only shows activity in the heterodimer.

The enzyme catalyses aldehydo-D-ribose 5-phosphate + D-glyceraldehyde 3-phosphate + L-glutamine = pyridoxal 5'-phosphate + L-glutamate + phosphate + 3 H2O + H(+). The catalysed reaction is L-glutamine + H2O = L-glutamate + NH4(+). The protein operates within cofactor biosynthesis; pyridoxal 5'-phosphate biosynthesis. Functionally, catalyzes the hydrolysis of glutamine to glutamate and ammonia as part of the biosynthesis of pyridoxal 5'-phosphate. The resulting ammonia molecule is channeled to the active site of PdxS. This is Pyridoxal 5'-phosphate synthase subunit PdxT from Methanoculleus marisnigri (strain ATCC 35101 / DSM 1498 / JR1).